The primary structure comprises 554 residues: Glucose-6-phosphate isomerase (554 aa).

E359 functions as the Proton donor in the catalytic mechanism. Catalysis depends on residues H390 and K518.

The protein belongs to the GPI family.

The protein resides in the cytoplasm. The catalysed reaction is alpha-D-glucose 6-phosphate = beta-D-fructose 6-phosphate. It participates in carbohydrate biosynthesis; gluconeogenesis. Its pathway is carbohydrate degradation; glycolysis; D-glyceraldehyde 3-phosphate and glycerone phosphate from D-glucose: step 2/4. In terms of biological role, catalyzes the reversible isomerization of glucose-6-phosphate to fructose-6-phosphate. This is Glucose-6-phosphate isomerase from Pseudomonas syringae pv. syringae (strain B728a).